Reading from the N-terminus, the 203-residue chain is UPF0637 protein SERP0693 (203 aa).

This sequence belongs to the UPF0637 family.

The protein is UPF0637 protein SERP0693 of Staphylococcus epidermidis (strain ATCC 35984 / DSM 28319 / BCRC 17069 / CCUG 31568 / BM 3577 / RP62A).